The chain runs to 72 residues: MKASLTCVGEYYNNVEQTELYLKAVASLRQTALYTSKPKDTDILLGKAFYKAGKLSEAGTVLNKYIYILSRE.

This is an uncharacterized protein from Rickettsia conorii (strain ATCC VR-613 / Malish 7).